Here is a 228-residue protein sequence, read N- to C-terminus: Cytidylate kinase (228 aa).

Residue 17–25 (GPTASGKGT) coordinates ATP.

Belongs to the cytidylate kinase family. Type 1 subfamily.

It is found in the cytoplasm. It carries out the reaction CMP + ATP = CDP + ADP. The enzyme catalyses dCMP + ATP = dCDP + ADP. The polypeptide is Cytidylate kinase (Burkholderia vietnamiensis (strain G4 / LMG 22486) (Burkholderia cepacia (strain R1808))).